We begin with the raw amino-acid sequence, 251 residues long: Probable transcriptional regulatory protein SYNPCC7002_A0851 (251 aa).

A Response regulatory domain is found at 20–141; it reads RILVVEDEAV…ELVARCRALL (122 aa). Aspartate 76 carries the 4-aspartylphosphate modification. Residues 153-251 constitute a DNA-binding region (ompR/PhoB-type); the sequence is NSVRQFKDIS…TVRGFGYRFG (99 aa).

Phosphorylation.

This is Probable transcriptional regulatory protein SYNPCC7002_A0851 from Picosynechococcus sp. (strain ATCC 27264 / PCC 7002 / PR-6) (Agmenellum quadruplicatum).